Here is a 211-residue protein sequence, read N- to C-terminus: Thymidylate kinase (211 aa).

11–18 (GPDGAGKT) lines the ATP pocket.

It belongs to the thymidylate kinase family.

The enzyme catalyses dTMP + ATP = dTDP + ADP. Functionally, phosphorylation of dTMP to form dTDP in both de novo and salvage pathways of dTTP synthesis. The protein is Thymidylate kinase of Streptococcus pyogenes serotype M1.